The primary structure comprises 141 residues: Large ribosomal subunit protein uL11 (141 aa).

This sequence belongs to the universal ribosomal protein uL11 family. As to quaternary structure, part of the ribosomal stalk of the 50S ribosomal subunit. Interacts with L10 and the large rRNA to form the base of the stalk. L10 forms an elongated spine to which L12 dimers bind in a sequential fashion forming a multimeric L10(L12)X complex. One or more lysine residues are methylated.

Its function is as follows. Forms part of the ribosomal stalk which helps the ribosome interact with GTP-bound translation factors. The protein is Large ribosomal subunit protein uL11 of Trichlorobacter lovleyi (strain ATCC BAA-1151 / DSM 17278 / SZ) (Geobacter lovleyi).